Reading from the N-terminus, the 211-residue chain is GTP-binding protein ypt5 (211 aa).

21-28 (GDSAVGKS) is a binding site for GTP. An Effector region motif is present at residues 43 to 51 (RESTIGAAF). Residues 70 to 74 (DTAGQ) and 128 to 131 (NKLD) each bind GTP. Residues Cys-209 and Cys-211 are each lipidated (S-geranylgeranyl cysteine). Cys-211 carries the post-translational modification Cysteine methyl ester.

Belongs to the small GTPase superfamily. Rab family.

Its subcellular location is the cell membrane. Its function is as follows. Protein transport. Probably involved in vesicular traffic. This is GTP-binding protein ypt5 (ypt5) from Schizosaccharomyces pombe (strain 972 / ATCC 24843) (Fission yeast).